The following is a 266-amino-acid chain: Glutamate racemase (266 aa).

Residues 10–11 and 42–43 contribute to the substrate site; these read DS and YG. Cys-73 functions as the Proton donor/acceptor in the catalytic mechanism. Residue 74-75 coordinates substrate; it reads NT. The active-site Proton donor/acceptor is Cys-183. 184–185 contacts substrate; sequence TH.

Belongs to the aspartate/glutamate racemases family.

The enzyme catalyses L-glutamate = D-glutamate. Its pathway is cell wall biogenesis; peptidoglycan biosynthesis. Its function is as follows. Provides the (R)-glutamate required for cell wall biosynthesis. In Lactobacillus johnsonii (strain CNCM I-12250 / La1 / NCC 533), this protein is Glutamate racemase.